Reading from the N-terminus, the 108-residue chain is Integration host factor subunit alpha (108 aa).

The protein belongs to the bacterial histone-like protein family. Heterodimer of an alpha and a beta chain.

In terms of biological role, this protein is one of the two subunits of integration host factor, a specific DNA-binding protein that functions in genetic recombination as well as in transcriptional and translational control. This Rhodopseudomonas palustris (strain BisB18) protein is Integration host factor subunit alpha.